Reading from the N-terminus, the 545-residue chain is MAVSAPLRSLEEEVTCSICLDYLRDPVTIDCGHVFCRSCTSDIRPISGNRPVCPLCKKPFKKENIRPVWQLASLVENIERLKVDNGRQPGELAREPQDMKLCERHQEKLHYYCEDDGKLLCVMCRESREHRPHTAVLVEKAALPHREKILNHLNTLRRDRDKIQGFQAKGEADILAALTKLQEQRQYIVAEFKQGHQFLKKREQHLLDQLATLEQLLTEGREKFKTRGVSELDRLTLVISELEGKARQPAAELMQDVCTTQDTKDFANKYPRKKFWIGKAIPHMVKRKAGEFSDKLLSLQRGLRQFQGKLLRDLEYKTVSVTLDPQSASGYLHLSEDWKCVTYTGQYQSDCLLPQQFDCEPGVLGSKGFTWGKVYWEVELEREGWSEDEEEGEEEEEGEEEEEDEEVGYGDGYEDWETDEEDESLGEEEEEEEEEEEEVQESCMVGVAKDSVKRKGDLSLRPEDGVWALRLSPSGIWANTSPEAQLFPVLRPRRVGIALDYEGGTVTFTNAESQELIYTFTTTFTRRLVPFLWLKWPGARLLLRP.

An RING-type zinc finger spans residues 16 to 57 (CSICLDYLRDPVTIDCGHVFCRSCTSDIRPISGNRPVCPLCK). Residues 97-138 (QDMKLCERHQEKLHYYCEDDGKLLCVMCRESREHRPHTAVLV) form a B box-type zinc finger. Zn(2+) contacts are provided by Cys102, His105, Cys124, and His130. The stretch at 197 to 243 (QFLKKREQHLLDQLATLEQLLTEGREKFKTRGVSELDRLTLVISELE) forms a coiled coil. The region spanning 301 to 545 (RGLRQFQGKL…WPGARLLLRP (245 aa)) is the B30.2/SPRY domain. Residues 382-443 (REGWSEDEEE…EEEEEVQESC (62 aa)) form a disordered region. A compositionally biased stretch (acidic residues) spans 386-440 (SEDEEEGEEEEEGEEEEEDEEVGYGDGYEDWETDEEDESLGEEEEEEEEEEEEVQ).

Belongs to the TRIM/RBCC family. Interacts with TBK1; this interaction bridges together TBK1 and NEMO in order to activate TBK1. Interacts with INCA1. In terms of processing, autoubiquitinates upon viral infection. In turn, autoubiquitinated TRIM26 recruits NEMO and bridges TBK1-NEMO interaction.

Its subcellular location is the cytoplasm. It localises to the nucleus. It catalyses the reaction S-ubiquitinyl-[E2 ubiquitin-conjugating enzyme]-L-cysteine + [acceptor protein]-L-lysine = [E2 ubiquitin-conjugating enzyme]-L-cysteine + N(6)-ubiquitinyl-[acceptor protein]-L-lysine.. In terms of biological role, E3 ubiquitin-protein ligase which regulates the IFN-beta production and antiviral response downstream of various DNA-encoded pattern-recognition receptors (PRRs). Also plays a central role in determining the response to different forms of oxidative stress by controlling levels of DNA glycosylases NEIL1, NEIL3 and NTH1 that are involved in repair of damaged DNA. Promotes nuclear IRF3 ubiquitination and proteasomal degradation. Bridges together TBK1 and NEMO during the innate response to viral infection leading to the activation of TBK1. Positively regulates LPS-mediated inflammatory innate immune response by catalyzing the 'Lys-11'-linked polyubiquitination of TAB1 to enhance its activation and subsequent NF-kappa-B and MAPK signaling. In a manner independent of its catalytic activity, inhibits WWP2, a SOX2-directed E3 ubiquitin ligase, and thus protects SOX2 from polyubiquitination and proteasomal degradation. Ubiquitinates the histone acetyltransferase protein complex component PHF20 and thereby triggers its degradation in the nucleus after its recruitment by the histone demethylase KDM6B, serving as a scaffold protein. Upon induction by TGF-beta, ubiquitinates the TFIID component TAF7 for proteasomal degradation. Induces ferroptosis by ubiquitinating SLC7A11, a critical protein for lipid reactive oxygen species (ROS) scavenging. In Mus musculus (Mouse), this protein is Tripartite motif-containing protein 26 (Trim26).